Consider the following 497-residue polypeptide: Serine/threonine-protein phosphatase 2A 56 kDa regulatory subunit beta isoform (497 aa).

A compositionally biased stretch (low complexity) spans 1–19 (METKLPPASTPTSPSSPGL). Disordered stretches follow at residues 1-55 (METK…YQSN) and 475-497 (TQGAKEAPLQRLTPQVAASGGQS). 6 positions are modified to phosphoserine; by CLK2: Ser32, Ser35, Ser44, Ser46, Ser47, and Ser48. The span at 34 to 45 (RSLRRARPRRSH) shows a compositional bias: basic residues.

Belongs to the phosphatase 2A regulatory subunit B56 family. Component of the serine/threonine-protein phosphatase 2A complex (PP2A). This complex consists of a common heterodimeric core enzyme, composed of a 36 kDa catalytic subunit (subunit C) and a 65 kDa constant scaffold subunit (PR65 or subunit A), that associates with a variety of regulatory subunits. Proteins that associate with the core dimer include three families of regulatory subunits B (the R2/B/PR55/B55, R3/B''/PR72/PR130/PR59 and R5/B'/B56 families), the 48 kDa variable regulatory subunit, viral proteins, and cell signaling molecules. Interacts with SGO1. Interacts with AKT1. Interacts with CUL3 and KLHL15; this interaction leads to proteasomal degradation. Post-translationally, ubiquitinated by E3 CUL3-KLHL15 complex; this modification leads to proteasomal degradation. In terms of tissue distribution, highest expression in brain.

The protein localises to the cytoplasm. Its function is as follows. As the regulatory component of the serine/threonine-protein phosphatase 2A (PP2A) holoenzyme, modulates substrate specificity, subcellular localization, and responsiveness to phosphorylation. The phosphorylated form mediates the interaction between PP2A and AKT1, leading to AKT1 dephosphorylation. The chain is Serine/threonine-protein phosphatase 2A 56 kDa regulatory subunit beta isoform (PPP2R5B) from Homo sapiens (Human).